Consider the following 448-residue polypeptide: Phosphoglucosamine mutase (448 aa).

The active-site Phosphoserine intermediate is Ser-100. Mg(2+)-binding residues include Ser-100, Asp-240, Asp-242, and Asp-244. Residue Ser-100 is modified to Phosphoserine.

It belongs to the phosphohexose mutase family. Mg(2+) serves as cofactor. In terms of processing, activated by phosphorylation.

It catalyses the reaction alpha-D-glucosamine 1-phosphate = D-glucosamine 6-phosphate. Catalyzes the conversion of glucosamine-6-phosphate to glucosamine-1-phosphate. The polypeptide is Phosphoglucosamine mutase (Bacillus licheniformis (strain ATCC 14580 / DSM 13 / JCM 2505 / CCUG 7422 / NBRC 12200 / NCIMB 9375 / NCTC 10341 / NRRL NRS-1264 / Gibson 46)).